The sequence spans 632 residues: Chaperone protein HtpG (632 aa).

The interval 1-339 is a; substrate-binding; the sequence is MAHETMSFQA…SADLPLNVSR (339 aa). Residues 340–559 are b; it reads EILQESRDVK…DNDMSGYLQR (220 aa). Residues 560–632 form a c region; the sequence is MLKAAGQNAP…TNALLLSRAA (73 aa).

It belongs to the heat shock protein 90 family. In terms of assembly, homodimer.

It is found in the cytoplasm. Its function is as follows. Molecular chaperone. Has ATPase activity. The polypeptide is Chaperone protein HtpG (Burkholderia lata (strain ATCC 17760 / DSM 23089 / LMG 22485 / NCIMB 9086 / R18194 / 383)).